A 233-amino-acid chain; its full sequence is ATP-dependent dethiobiotin synthetase BioD (233 aa).

12-17 lines the ATP pocket; sequence GVGKTI. Thr16 contacts Mg(2+). Residue Lys37 is part of the active site. Ser41 contacts substrate. ATP contacts are provided by residues Asp51, 112-115, and 202-204; these read EGAG and PKL. 2 residues coordinate Mg(2+): Asp51 and Glu112.

The protein belongs to the dethiobiotin synthetase family. Homodimer. It depends on Mg(2+) as a cofactor.

Its subcellular location is the cytoplasm. It catalyses the reaction (7R,8S)-7,8-diammoniononanoate + CO2 + ATP = (4R,5S)-dethiobiotin + ADP + phosphate + 3 H(+). It participates in cofactor biosynthesis; biotin biosynthesis; biotin from 7,8-diaminononanoate: step 1/2. Catalyzes a mechanistically unusual reaction, the ATP-dependent insertion of CO2 between the N7 and N8 nitrogen atoms of 7,8-diaminopelargonic acid (DAPA, also called 7,8-diammoniononanoate) to form a ureido ring. In Bacillus velezensis (strain DSM 23117 / BGSC 10A6 / LMG 26770 / FZB42) (Bacillus amyloliquefaciens subsp. plantarum), this protein is ATP-dependent dethiobiotin synthetase BioD.